Reading from the N-terminus, the 155-residue chain is Ribonuclease HI (155 aa).

An RNase H type-1 domain is found at 1-142 (MTKQVEIFTD…CDELARAAAE (142 aa)). The Mg(2+) site is built by aspartate 10, glutamate 48, aspartate 70, and aspartate 134.

This sequence belongs to the RNase H family. In terms of assembly, monomer. Requires Mg(2+) as cofactor.

It localises to the cytoplasm. The catalysed reaction is Endonucleolytic cleavage to 5'-phosphomonoester.. Endonuclease that specifically degrades the RNA of RNA-DNA hybrids. The polypeptide is Ribonuclease HI (Vibrio vulnificus (strain CMCP6)).